The primary structure comprises 344 residues: Arylacetonitrilase (344 aa).

The 286-residue stretch at Leu5–Leu290 folds into the CN hydrolase domain. The active-site Proton acceptor is the Glu45. Lys126 is a catalytic residue. Cys167 functions as the Nucleophile in the catalytic mechanism. A disordered region spans residues Val324–Glu344.

It belongs to the carbon-nitrogen hydrolase superfamily. Nitrilase family.

It catalyses the reaction a nitrile + 2 H2O = a carboxylate + NH4(+). It carries out the reaction 4-chlorophenylacetonitrile + 2 H2O = 4-chlorophenylacetate + NH4(+). Nitrilase that hydrolyzes preferentially phenylacetonitrile and (R,S)-mandelonitrile. Also acts on dinitriles like phenylenediacetonitriles (PDAs) 1,2-PDA, 1,3-PDA, and 1,4-PDA, and cyanophenyl acetonitriles (CPAs) 2-CPA and 4-CPA. This chain is Arylacetonitrilase, found in Macrophomina phaseolina (strain MS6) (Charcoal rot fungus).